Here is a 357-residue protein sequence, read N- to C-terminus: Ribosomal RNA large subunit methyltransferase M (357 aa).

S-adenosyl-L-methionine contacts are provided by residues Ser-183, 216 to 219 (APGG), Asp-235, Asp-255, and Asp-271. Residue Lys-300 is the Proton acceptor of the active site.

The protein belongs to the class I-like SAM-binding methyltransferase superfamily. RNA methyltransferase RlmE family. RlmM subfamily. In terms of assembly, monomer.

The protein resides in the cytoplasm. It catalyses the reaction cytidine(2498) in 23S rRNA + S-adenosyl-L-methionine = 2'-O-methylcytidine(2498) in 23S rRNA + S-adenosyl-L-homocysteine + H(+). In terms of biological role, catalyzes the 2'-O-methylation at nucleotide C2498 in 23S rRNA. In Pseudomonas savastanoi pv. phaseolicola (strain 1448A / Race 6) (Pseudomonas syringae pv. phaseolicola (strain 1448A / Race 6)), this protein is Ribosomal RNA large subunit methyltransferase M.